The following is a 481-amino-acid chain: Trigger factor (481 aa).

One can recognise a PPIase FKBP-type domain in the interval 174-261 (GDIAVVSFKG…LKDLKEKELP (88 aa)). A disordered region spans residues 435–481 (VKEKTTKASQASKTTKAKKTTTKTTKATKTATKTTKATKTQNKKEKK). Positions 456–474 (TKTTKATKTATKTTKATKT) are enriched in low complexity.

This sequence belongs to the FKBP-type PPIase family. Tig subfamily.

Its subcellular location is the cytoplasm. The catalysed reaction is [protein]-peptidylproline (omega=180) = [protein]-peptidylproline (omega=0). Involved in protein export. Acts as a chaperone by maintaining the newly synthesized protein in an open conformation. Functions as a peptidyl-prolyl cis-trans isomerase. This Prochlorococcus marinus (strain MIT 9312) protein is Trigger factor.